Here is a 399-residue protein sequence, read N- to C-terminus: S-adenosylmethionine synthase (399 aa).

Histidine 17 is an ATP binding site. Residue aspartate 19 participates in Mg(2+) binding. Position 52 (glutamate 52) interacts with K(+). L-methionine is bound by residues glutamate 65 and glutamine 109. The tract at residues 109 to 119 is flexible loop; sequence QSADIAQGVDA. Residues 177–179, 243–244, aspartate 252, 258–259, alanine 275, and lysine 279 each bind ATP; these read DSK, KF, and RK. Residue aspartate 252 participates in L-methionine binding. Lysine 283 contributes to the L-methionine binding site.

Belongs to the AdoMet synthase family. As to quaternary structure, homotetramer; dimer of dimers. Requires Mg(2+) as cofactor. K(+) serves as cofactor.

Its subcellular location is the cytoplasm. It carries out the reaction L-methionine + ATP + H2O = S-adenosyl-L-methionine + phosphate + diphosphate. The protein operates within amino-acid biosynthesis; S-adenosyl-L-methionine biosynthesis; S-adenosyl-L-methionine from L-methionine: step 1/1. Catalyzes the formation of S-adenosylmethionine (AdoMet) from methionine and ATP. The overall synthetic reaction is composed of two sequential steps, AdoMet formation and the subsequent tripolyphosphate hydrolysis which occurs prior to release of AdoMet from the enzyme. This chain is S-adenosylmethionine synthase, found in Bradyrhizobium sp. (strain BTAi1 / ATCC BAA-1182).